The following is a 143-amino-acid chain: uncharacterized protein (143 aa).

The protein localises to the mitochondrion. This is an uncharacterized protein from Arabidopsis thaliana (Mouse-ear cress).